Here is a 723-residue protein sequence, read N- to C-terminus: Nucleolar protein 11 (723 aa).

The protein localises to the nucleus. The protein resides in the nucleolus. Functionally, ribosome biogenesis factor. May be required for both optimal rDNA transcription and pre-rRNA processing. This chain is Nucleolar protein 11 (NOL11), found in Gallus gallus (Chicken).